We begin with the raw amino-acid sequence, 300 residues long: Lipoyl synthase 2 (300 aa).

Residues Cys46, Cys51, Cys57, Cys72, Cys76, Cys79, and Ser294 each coordinate [4Fe-4S] cluster. Residues 58 to 283 enclose the Radical SAM core domain; sequence YAQKTATFLL…GKLAREMGFS (226 aa).

The protein belongs to the radical SAM superfamily. Lipoyl synthase family. It depends on [4Fe-4S] cluster as a cofactor.

It is found in the cytoplasm. The enzyme catalyses [[Fe-S] cluster scaffold protein carrying a second [4Fe-4S](2+) cluster] + N(6)-octanoyl-L-lysyl-[protein] + 2 oxidized [2Fe-2S]-[ferredoxin] + 2 S-adenosyl-L-methionine + 4 H(+) = [[Fe-S] cluster scaffold protein] + N(6)-[(R)-dihydrolipoyl]-L-lysyl-[protein] + 4 Fe(3+) + 2 hydrogen sulfide + 2 5'-deoxyadenosine + 2 L-methionine + 2 reduced [2Fe-2S]-[ferredoxin]. It functions in the pathway protein modification; protein lipoylation via endogenous pathway; protein N(6)-(lipoyl)lysine from octanoyl-[acyl-carrier-protein]: step 2/2. Functionally, catalyzes the radical-mediated insertion of two sulfur atoms into the C-6 and C-8 positions of the octanoyl moiety bound to the lipoyl domains of lipoate-dependent enzymes, thereby converting the octanoylated domains into lipoylated derivatives. This chain is Lipoyl synthase 2, found in Nostoc sp. (strain PCC 7120 / SAG 25.82 / UTEX 2576).